The chain runs to 197 residues: Xanthine phosphoribosyltransferase (197 aa).

The xanthine site is built by L20 and N27. 128–132 (ANGQA) is a 5-phospho-alpha-D-ribose 1-diphosphate binding site. K156 contacts xanthine.

It belongs to the purine/pyrimidine phosphoribosyltransferase family. Xpt subfamily. As to quaternary structure, homodimer.

The protein localises to the cytoplasm. The enzyme catalyses XMP + diphosphate = xanthine + 5-phospho-alpha-D-ribose 1-diphosphate. Its pathway is purine metabolism; XMP biosynthesis via salvage pathway; XMP from xanthine: step 1/1. In terms of biological role, converts the preformed base xanthine, a product of nucleic acid breakdown, to xanthosine 5'-monophosphate (XMP), so it can be reused for RNA or DNA synthesis. In Bacillus cereus (strain ZK / E33L), this protein is Xanthine phosphoribosyltransferase.